A 596-amino-acid chain; its full sequence is Elongation factor 4 (596 aa).

The 183-residue stretch at 2–184 (KHIRNFSIIA…TIVAQIPSPE (183 aa)) folds into the tr-type G domain. GTP is bound by residues 14 to 19 (DHGKST) and 131 to 134 (NKID).

This sequence belongs to the TRAFAC class translation factor GTPase superfamily. Classic translation factor GTPase family. LepA subfamily.

It localises to the cell inner membrane. The catalysed reaction is GTP + H2O = GDP + phosphate + H(+). Required for accurate and efficient protein synthesis under certain stress conditions. May act as a fidelity factor of the translation reaction, by catalyzing a one-codon backward translocation of tRNAs on improperly translocated ribosomes. Back-translocation proceeds from a post-translocation (POST) complex to a pre-translocation (PRE) complex, thus giving elongation factor G a second chance to translocate the tRNAs correctly. Binds to ribosomes in a GTP-dependent manner. This Shewanella amazonensis (strain ATCC BAA-1098 / SB2B) protein is Elongation factor 4.